Here is a 148-residue protein sequence, read N- to C-terminus: Hydrogenase expression/formation protein HoxO (148 aa).

The disordered stretch occupies residues 128 to 148 (IPVLSPESGTPSCSPMETSES). Over residues 134-148 (ESGTPSCSPMETSES) the composition is skewed to polar residues.

The protein belongs to the HupG/HyaE family.

The protein is Hydrogenase expression/formation protein HoxO (hoxO) of Azotobacter vinelandii.